A 72-amino-acid chain; its full sequence is Sec-independent protein translocase protein TatA (72 aa).

A helical transmembrane segment spans residues 1–21; sequence MPFGLGLPEILVIGVIALLIF. A disordered region spans residues 41-72; sequence KSGVSDEPAPQQSASKETAPNPPQSLPSGKDS.

Belongs to the TatA/E family. Forms a complex with TatC.

Its subcellular location is the cell inner membrane. Its function is as follows. Part of the twin-arginine translocation (Tat) system that transports large folded proteins containing a characteristic twin-arginine motif in their signal peptide across membranes. TatA could form the protein-conducting channel of the Tat system. In Gloeobacter violaceus (strain ATCC 29082 / PCC 7421), this protein is Sec-independent protein translocase protein TatA.